A 101-amino-acid chain; its full sequence is Protein S100-A7-like 2 (101 aa).

EF-hand domains are found at residues 13–48 (IVAM…SGCE) and 50–85 (SDMD…ITID). Ca(2+) contacts are provided by D63, N65, D67, K69, and E74. The Zn(2+) site is built by H87 and H91.

This sequence belongs to the S-100 family.

The protein is Protein S100-A7-like 2 (S100A7L2) of Homo sapiens (Human).